Here is a 292-residue protein sequence, read N- to C-terminus: MLVKIGTRGSKLAVVQALEAKQKLLDSFPNLSIEIVKIKTSGDKYANANLAEIGGKGLFIKEIEAELLENNIDMAVHSLKDVPAFFSWGLTIPCVLERLSPCDAFISHKHNSLESLPQQATIATSAIRRKVQLLNFRPDLNIVPLRGNVTTRLQNQSFDGIILAEAGLIRLEKHHLITEVLPPKVMLSAVGQGAICIQCRRNDVKIIDLLEKINNNMSFIGVKSERSFMKTVNGSCFTPLAALAEYVSENMLYLRCMLADGKNIYFTERTSFIEDAEKMGMDAGLELKSKCL.

Cys-236 bears the S-(dipyrrolylmethanemethyl)cysteine mark.

This sequence belongs to the HMBS family. As to quaternary structure, monomer. Requires dipyrromethane as cofactor.

The enzyme catalyses 4 porphobilinogen + H2O = hydroxymethylbilane + 4 NH4(+). The protein operates within porphyrin-containing compound metabolism; protoporphyrin-IX biosynthesis; coproporphyrinogen-III from 5-aminolevulinate: step 2/4. Functionally, tetrapolymerization of the monopyrrole PBG into the hydroxymethylbilane pre-uroporphyrinogen in several discrete steps. In Wolbachia sp. subsp. Drosophila simulans (strain wRi), this protein is Porphobilinogen deaminase.